The primary structure comprises 208 residues: Methylthioribulose-1-phosphate dehydratase (208 aa).

Zn(2+) contacts are provided by H98 and H100.

Belongs to the aldolase class II family. MtnB subfamily. Requires Zn(2+) as cofactor.

It catalyses the reaction 5-(methylsulfanyl)-D-ribulose 1-phosphate = 5-methylsulfanyl-2,3-dioxopentyl phosphate + H2O. Its pathway is amino-acid biosynthesis; L-methionine biosynthesis via salvage pathway; L-methionine from S-methyl-5-thio-alpha-D-ribose 1-phosphate: step 2/6. Functionally, catalyzes the dehydration of methylthioribulose-1-phosphate (MTRu-1-P) into 2,3-diketo-5-methylthiopentyl-1-phosphate (DK-MTP-1-P). In Marinobacter nauticus (strain ATCC 700491 / DSM 11845 / VT8) (Marinobacter aquaeolei), this protein is Methylthioribulose-1-phosphate dehydratase.